A 392-amino-acid chain; its full sequence is S-adenosylmethionine synthase (392 aa).

Residue His20 coordinates ATP. Asp22 is a Mg(2+) binding site. Residue Glu48 coordinates K(+). Residues Glu61 and Gln106 each coordinate L-methionine. The interval 106 to 116 is flexible loop; it reads QSQDIINAIKK. Residues 171–173, Asp248, 254–255, Ala271, and Lys275 each bind ATP; these read DSK and RK. An L-methionine-binding site is contributed by Asp248. Lys279 is an L-methionine binding site.

This sequence belongs to the AdoMet synthase family. Homotetramer; dimer of dimers. The cofactor is Mg(2+). Requires K(+) as cofactor.

Its subcellular location is the cytoplasm. It catalyses the reaction L-methionine + ATP + H2O = S-adenosyl-L-methionine + phosphate + diphosphate. It participates in amino-acid biosynthesis; S-adenosyl-L-methionine biosynthesis; S-adenosyl-L-methionine from L-methionine: step 1/1. In terms of biological role, catalyzes the formation of S-adenosylmethionine (AdoMet) from methionine and ATP. The overall synthetic reaction is composed of two sequential steps, AdoMet formation and the subsequent tripolyphosphate hydrolysis which occurs prior to release of AdoMet from the enzyme. The polypeptide is S-adenosylmethionine synthase (Borrelia garinii subsp. bavariensis (strain ATCC BAA-2496 / DSM 23469 / PBi) (Borreliella bavariensis)).